Consider the following 220-residue polypeptide: Deoxyribose-phosphate aldolase (220 aa).

Asp-89 serves as the catalytic Proton donor/acceptor. Lys-150 acts as the Schiff-base intermediate with acetaldehyde in catalysis. Lys-182 serves as the catalytic Proton donor/acceptor.

It belongs to the DeoC/FbaB aldolase family. DeoC type 1 subfamily.

The protein resides in the cytoplasm. It catalyses the reaction 2-deoxy-D-ribose 5-phosphate = D-glyceraldehyde 3-phosphate + acetaldehyde. Its pathway is carbohydrate degradation; 2-deoxy-D-ribose 1-phosphate degradation; D-glyceraldehyde 3-phosphate and acetaldehyde from 2-deoxy-alpha-D-ribose 1-phosphate: step 2/2. In terms of biological role, catalyzes a reversible aldol reaction between acetaldehyde and D-glyceraldehyde 3-phosphate to generate 2-deoxy-D-ribose 5-phosphate. This chain is Deoxyribose-phosphate aldolase, found in Mycoplasmoides pirum (Mycoplasma pirum).